We begin with the raw amino-acid sequence, 703 residues long: Elongation factor G 1 (703 aa).

The region spanning 8-290 (ERYRNIGISA…AVIDFLPSPV (283 aa)) is the tr-type G domain. GTP contacts are provided by residues 17–24 (AHIDAGKT), 88–92 (DTPGH), and 142–145 (NKMD).

This sequence belongs to the TRAFAC class translation factor GTPase superfamily. Classic translation factor GTPase family. EF-G/EF-2 subfamily.

It is found in the cytoplasm. Its function is as follows. Catalyzes the GTP-dependent ribosomal translocation step during translation elongation. During this step, the ribosome changes from the pre-translocational (PRE) to the post-translocational (POST) state as the newly formed A-site-bound peptidyl-tRNA and P-site-bound deacylated tRNA move to the P and E sites, respectively. Catalyzes the coordinated movement of the two tRNA molecules, the mRNA and conformational changes in the ribosome. This chain is Elongation factor G 1, found in Cupriavidus metallidurans (strain ATCC 43123 / DSM 2839 / NBRC 102507 / CH34) (Ralstonia metallidurans).